The following is a 333-amino-acid chain: 4-hydroxy-3-methylbut-2-enyl diphosphate reductase (333 aa).

C34 contacts [4Fe-4S] cluster. (2E)-4-hydroxy-3-methylbut-2-enyl diphosphate-binding residues include H63 and H96. 2 residues coordinate dimethylallyl diphosphate: H63 and H96. Positions 63 and 96 each coordinate isopentenyl diphosphate. C118 serves as a coordination point for [4Fe-4S] cluster. Residue H146 coordinates (2E)-4-hydroxy-3-methylbut-2-enyl diphosphate. H146 lines the dimethylallyl diphosphate pocket. Residue H146 coordinates isopentenyl diphosphate. E148 functions as the Proton donor in the catalytic mechanism. T186 lines the (2E)-4-hydroxy-3-methylbut-2-enyl diphosphate pocket. Residue C216 coordinates [4Fe-4S] cluster. (2E)-4-hydroxy-3-methylbut-2-enyl diphosphate-binding residues include S244, S245, N246, and S289. Dimethylallyl diphosphate contacts are provided by S244, S245, N246, and S289. Residues S244, S245, N246, and S289 each contribute to the isopentenyl diphosphate site.

Belongs to the IspH family. [4Fe-4S] cluster is required as a cofactor.

It catalyses the reaction isopentenyl diphosphate + 2 oxidized [2Fe-2S]-[ferredoxin] + H2O = (2E)-4-hydroxy-3-methylbut-2-enyl diphosphate + 2 reduced [2Fe-2S]-[ferredoxin] + 2 H(+). The catalysed reaction is dimethylallyl diphosphate + 2 oxidized [2Fe-2S]-[ferredoxin] + H2O = (2E)-4-hydroxy-3-methylbut-2-enyl diphosphate + 2 reduced [2Fe-2S]-[ferredoxin] + 2 H(+). Its pathway is isoprenoid biosynthesis; dimethylallyl diphosphate biosynthesis; dimethylallyl diphosphate from (2E)-4-hydroxy-3-methylbutenyl diphosphate: step 1/1. It participates in isoprenoid biosynthesis; isopentenyl diphosphate biosynthesis via DXP pathway; isopentenyl diphosphate from 1-deoxy-D-xylulose 5-phosphate: step 6/6. Functionally, catalyzes the conversion of 1-hydroxy-2-methyl-2-(E)-butenyl 4-diphosphate (HMBPP) into a mixture of isopentenyl diphosphate (IPP) and dimethylallyl diphosphate (DMAPP). Acts in the terminal step of the DOXP/MEP pathway for isoprenoid precursor biosynthesis. This chain is 4-hydroxy-3-methylbut-2-enyl diphosphate reductase, found in Mycolicibacterium gilvum (strain PYR-GCK) (Mycobacterium gilvum (strain PYR-GCK)).